The sequence spans 476 residues: Chromosomal replication initiator protein DnaA (476 aa).

The interval methionine 1 to glutamate 73 is domain I, interacts with DnaA modulators. The tract at residues glutamate 73 to serine 132 is domain II. The segment at lysine 92 to arginine 115 is disordered. Over residues glutamate 99–serine 112 the composition is skewed to basic and acidic residues. Positions proline 133 to serine 355 are domain III, AAA+ region. Residues glycine 180, glycine 182, lysine 183, and threonine 184 each contribute to the ATP site. The tract at residues lysine 356–aspartate 476 is domain IV, binds dsDNA.

It belongs to the DnaA family. In terms of assembly, oligomerizes as a right-handed, spiral filament on DNA at oriC.

It is found in the cytoplasm. Functionally, plays an essential role in the initiation and regulation of chromosomal replication. ATP-DnaA binds to the origin of replication (oriC) to initiate formation of the DNA replication initiation complex once per cell cycle. Binds the DnaA box (a 9 base pair repeat at the origin) and separates the double-stranded (ds)DNA. Forms a right-handed helical filament on oriC DNA; dsDNA binds to the exterior of the filament while single-stranded (ss)DNA is stabiized in the filament's interior. The ATP-DnaA-oriC complex binds and stabilizes one strand of the AT-rich DNA unwinding element (DUE), permitting loading of DNA polymerase. After initiation quickly degrades to an ADP-DnaA complex that is not apt for DNA replication. Binds acidic phospholipids. The protein is Chromosomal replication initiator protein DnaA of Bradyrhizobium sp. (strain ORS 278).